A 345-amino-acid polypeptide reads, in one-letter code: Heat-inducible transcription repressor HrcA (345 aa).

Belongs to the HrcA family.

Its function is as follows. Negative regulator of class I heat shock genes (grpE-dnaK-dnaJ and groELS operons). Prevents heat-shock induction of these operons. This chain is Heat-inducible transcription repressor HrcA, found in Corynebacterium diphtheriae (strain ATCC 700971 / NCTC 13129 / Biotype gravis).